The primary structure comprises 253 residues: Alpha-acetolactate decarboxylase (253 aa).

This sequence belongs to the alpha-acetolactate decarboxylase family.

The enzyme catalyses (2S)-2-acetolactate + H(+) = (R)-acetoin + CO2. It functions in the pathway polyol metabolism; (R,R)-butane-2,3-diol biosynthesis; (R,R)-butane-2,3-diol from pyruvate: step 2/3. In terms of biological role, converts acetolactate into acetoin. The polypeptide is Alpha-acetolactate decarboxylase (alsD) (Bacillus licheniformis (strain ATCC 14580 / DSM 13 / JCM 2505 / CCUG 7422 / NBRC 12200 / NCIMB 9375 / NCTC 10341 / NRRL NRS-1264 / Gibson 46)).